The chain runs to 396 residues: Aspartic protease 1 (396 aa).

A signal peptide spans 1–15 (MQTFVLLALVAACSA). The Peptidase A1 domain maps to 68–389 (YLGNITLGTP…DIGNGQIGFA (322 aa)). N-linked (GlcNAc...) asparagine glycosylation occurs at Asn71. Asp86 is an active-site residue. Residues Cys99 and Cys104 are joined by a disulfide bond. Residue Asp278 is part of the active site. Cys313 and Cys349 are disulfide-bonded.

The protein belongs to the peptidase A1 family. As to quaternary structure, interacts with B.thuringiensis endotoxin Cry6Aa; the interaction prevents Cry6Aa proteolysis by host gut proteases.

It localises to the cytoplasm. Its subcellular location is the lysosome. The protein resides in the secreted. In terms of biological role, aspartic protease, which is part of the necrosis cell death pathway. Promotes B.thuringiensis Cry6Aa stability by preventing its proteolysis by host gut proteases. Required for Cry6Aa-induced necrotic death of intestinal cells. Cry6Aa uptake into the host intestinal cells triggers an increase in intracellular Ca(2+) levels leading to lysosome rupture and to the subsequent release of asp-1 which leads to necrosis. This chain is Aspartic protease 1, found in Caenorhabditis elegans.